The following is a 283-amino-acid chain: Polyamine aminopropyltransferase (283 aa).

Residues N5–K241 form the PABS domain. An S-methyl-5'-thioadenosine-binding site is contributed by Q35. Positions 66 and 90 each coordinate spermidine. S-methyl-5'-thioadenosine is bound by residues D110 and D141–G142. Residue D160 is the Proton acceptor of the active site. Residue D160 to D163 coordinates spermidine. P167 is a binding site for S-methyl-5'-thioadenosine.

Belongs to the spermidine/spermine synthase family. As to quaternary structure, homodimer or homotetramer.

The protein localises to the cytoplasm. The catalysed reaction is S-adenosyl 3-(methylsulfanyl)propylamine + putrescine = S-methyl-5'-thioadenosine + spermidine + H(+). It participates in amine and polyamine biosynthesis; spermidine biosynthesis; spermidine from putrescine: step 1/1. In terms of biological role, catalyzes the irreversible transfer of a propylamine group from the amino donor S-adenosylmethioninamine (decarboxy-AdoMet) to putrescine (1,4-diaminobutane) to yield spermidine. The polypeptide is Polyamine aminopropyltransferase (Stenotrophomonas maltophilia (strain R551-3)).